The chain runs to 508 residues: Cell division protein FtsZ (508 aa).

GTP-binding positions include 24–28 (GAGGN), 111–113 (GTG), glutamate 142, arginine 146, and aspartate 190. 2 disordered regions span residues 342–389 (IAET…SAPQ) and 428–508 (VAEE…RLAN). The span at 464–482 (QQASAPQAQARSAQSARPQ) shows a compositional bias: low complexity.

Belongs to the FtsZ family. As to quaternary structure, homodimer. Polymerizes to form a dynamic ring structure in a strictly GTP-dependent manner. Interacts directly with several other division proteins.

Its subcellular location is the cytoplasm. Essential cell division protein that forms a contractile ring structure (Z ring) at the future cell division site. The regulation of the ring assembly controls the timing and the location of cell division. One of the functions of the FtsZ ring is to recruit other cell division proteins to the septum to produce a new cell wall between the dividing cells. Binds GTP and shows GTPase activity. The chain is Cell division protein FtsZ from Caulobacter vibrioides (strain ATCC 19089 / CIP 103742 / CB 15) (Caulobacter crescentus).